The following is a 56-amino-acid chain: UPF0391 membrane protein Noc_0482 (56 aa).

2 consecutive transmembrane segments (helical) span residues 1 to 21 (MFGWAVTFLIIALIAALFGFT) and 29 to 49 (HIAWILFVVGLILFVVFLLLG).

Belongs to the UPF0391 family.

The protein localises to the cell membrane. This is UPF0391 membrane protein Noc_0482 from Nitrosococcus oceani (strain ATCC 19707 / BCRC 17464 / JCM 30415 / NCIMB 11848 / C-107).